The primary structure comprises 349 residues: Glycerol-3-phosphate dehydrogenase [NAD(P)+] (349 aa).

NADPH is bound by residues Ser-31, Phe-32, Arg-52, Lys-53, and Lys-126. The sn-glycerol 3-phosphate site is built by Lys-126, Gly-154, and Ser-156. Ala-158 provides a ligand contact to NADPH. Lys-209, Asp-262, Ser-272, Arg-273, and Asn-274 together coordinate sn-glycerol 3-phosphate. The Proton acceptor role is filled by Lys-209. Residue Arg-273 participates in NADPH binding. Residues Val-297 and Glu-299 each coordinate NADPH.

It belongs to the NAD-dependent glycerol-3-phosphate dehydrogenase family.

It localises to the cytoplasm. The enzyme catalyses sn-glycerol 3-phosphate + NAD(+) = dihydroxyacetone phosphate + NADH + H(+). The catalysed reaction is sn-glycerol 3-phosphate + NADP(+) = dihydroxyacetone phosphate + NADPH + H(+). It participates in membrane lipid metabolism; glycerophospholipid metabolism. Functionally, catalyzes the reduction of the glycolytic intermediate dihydroxyacetone phosphate (DHAP) to sn-glycerol 3-phosphate (G3P), the key precursor for phospholipid synthesis. This is Glycerol-3-phosphate dehydrogenase [NAD(P)+] from Clostridium tetani (strain Massachusetts / E88).